Here is a 225-residue protein sequence, read N- to C-terminus: MDKRISIAIDGPAAAGKSTVAKVVAKKLSYVYIDTGAMYRTITYAALEQKVDIENEEQLMEVVKNVKIEFQQGENTQLVFLNGQDVSEVIRTPEVTNRVSIVAKHRLVREEMVRRQQELAEKGGVVMDGRDIGTHVLPDAEVKIFMLASVEERAERRHLENMNKGFDSNLEQLKEEIAQRDKLDSEREVSPLKKADDALELDTTSLSIEEVVQKIMSIVSGVFAK.

11–19 contacts ATP; that stretch reads GPAAAGKST.

This sequence belongs to the cytidylate kinase family. Type 1 subfamily.

It localises to the cytoplasm. It catalyses the reaction CMP + ATP = CDP + ADP. It carries out the reaction dCMP + ATP = dCDP + ADP. The protein is Cytidylate kinase of Bacillus cereus (strain ATCC 10987 / NRS 248).